A 508-amino-acid chain; its full sequence is Lysine--tRNA ligase (508 aa).

Glu418 and Glu425 together coordinate Mg(2+).

This sequence belongs to the class-II aminoacyl-tRNA synthetase family. In terms of assembly, homodimer. Mg(2+) is required as a cofactor.

The protein localises to the cytoplasm. The enzyme catalyses tRNA(Lys) + L-lysine + ATP = L-lysyl-tRNA(Lys) + AMP + diphosphate. The chain is Lysine--tRNA ligase from Burkholderia thailandensis (strain ATCC 700388 / DSM 13276 / CCUG 48851 / CIP 106301 / E264).